We begin with the raw amino-acid sequence, 341 residues long: tRNA N6-adenosine threonylcarbamoyltransferase (341 aa).

His-111 and His-115 together coordinate Fe cation. Substrate-binding positions include 134 to 138 (LVSGG), Asp-167, Gly-180, and Asn-276. Fe cation is bound at residue Asp-304.

This sequence belongs to the KAE1 / TsaD family. Fe(2+) is required as a cofactor.

It localises to the cytoplasm. The enzyme catalyses L-threonylcarbamoyladenylate + adenosine(37) in tRNA = N(6)-L-threonylcarbamoyladenosine(37) in tRNA + AMP + H(+). Functionally, required for the formation of a threonylcarbamoyl group on adenosine at position 37 (t(6)A37) in tRNAs that read codons beginning with adenine. Is involved in the transfer of the threonylcarbamoyl moiety of threonylcarbamoyl-AMP (TC-AMP) to the N6 group of A37, together with TsaE and TsaB. TsaD likely plays a direct catalytic role in this reaction. This is tRNA N6-adenosine threonylcarbamoyltransferase from Pseudomonas syringae pv. tomato (strain ATCC BAA-871 / DC3000).